The primary structure comprises 865 residues: Alanine--tRNA ligase (865 aa).

Zn(2+) is bound by residues His554, His558, Cys656, and His660.

It belongs to the class-II aminoacyl-tRNA synthetase family. It depends on Zn(2+) as a cofactor.

It is found in the cytoplasm. It catalyses the reaction tRNA(Ala) + L-alanine + ATP = L-alanyl-tRNA(Ala) + AMP + diphosphate. Catalyzes the attachment of alanine to tRNA(Ala) in a two-step reaction: alanine is first activated by ATP to form Ala-AMP and then transferred to the acceptor end of tRNA(Ala). Also edits incorrectly charged Ser-tRNA(Ala) and Gly-tRNA(Ala) via its editing domain. The polypeptide is Alanine--tRNA ligase (Idiomarina loihiensis (strain ATCC BAA-735 / DSM 15497 / L2-TR)).